The following is a 54-amino-acid chain: UPF0391 membrane protein Bpet1858 (54 aa).

2 helical membrane passes run 5–25 (AVVF…GIAA) and 27–47 (AAGI…LSIL).

It belongs to the UPF0391 family.

It is found in the cell membrane. This Bordetella petrii (strain ATCC BAA-461 / DSM 12804 / CCUG 43448) protein is UPF0391 membrane protein Bpet1858.